The following is an 873-amino-acid chain: Leucine--tRNA ligase (873 aa).

Positions Pro42–His52 match the 'HIGH' region motif. Residues Pro624–Pro643 form a disordered region. Residues Lys632–Ser636 carry the 'KMSKS' region motif. Residue Lys635 participates in ATP binding.

It belongs to the class-I aminoacyl-tRNA synthetase family.

It is found in the cytoplasm. It catalyses the reaction tRNA(Leu) + L-leucine + ATP = L-leucyl-tRNA(Leu) + AMP + diphosphate. This Pseudomonas aeruginosa (strain LESB58) protein is Leucine--tRNA ligase.